Here is a 254-residue protein sequence, read N- to C-terminus: Photosystem II 22 kDa protein 2, chloroplastic (254 aa).

The N-terminal 38 residues, 1-38 (MALQQSMAMPMMVVSGLGTAPRSSPMVQLQRMKKHLVV), are a transit peptide targeting the chloroplast. Tandem repeats lie at residues 42–148 (FKSR…FVDD) and 149–253 (ATGL…DNDD). The next 4 membrane-spanning stretches (helical) occupy residues 86 to 106 (VAMLGFAASLLGEAVTGKGIL), 120 to 140 (AEPLLLFFILFTLLGAIGALG), 184 to 204 (LFVGRLAQLGIAFSLIGEIIT), and 219 to 239 (PINEIEPLLLFNILFFFFAAI).

This sequence belongs to the ELIP/psbS family.

Its subcellular location is the plastid. The protein localises to the chloroplast thylakoid membrane. Its function is as follows. Involved in high light-mediated energy-dependent nonphotochemical quenching (NPQ, qE) and thermal dissipation (TD) thus regulating energy conversion in photosystem II and protecting from photoinhibition. Also seems to regulate quantum yield of electron transport in fluctuating light conditions. This chain is Photosystem II 22 kDa protein 2, chloroplastic, found in Oryza sativa subsp. indica (Rice).